A 152-amino-acid polypeptide reads, in one-letter code: uncharacterized protein (152 aa).

One can recognise a VOC domain in the interval 7–133 (PALSPHLVVD…FGHHWSLGQP (127 aa)).

This is an uncharacterized protein from Mycobacterium bovis (strain ATCC BAA-935 / AF2122/97).